We begin with the raw amino-acid sequence, 468 residues long: Asparagine--tRNA ligase (468 aa).

Belongs to the class-II aminoacyl-tRNA synthetase family. Homodimer.

It localises to the cytoplasm. The catalysed reaction is tRNA(Asn) + L-asparagine + ATP = L-asparaginyl-tRNA(Asn) + AMP + diphosphate + H(+). The polypeptide is Asparagine--tRNA ligase (Parabacteroides distasonis (strain ATCC 8503 / DSM 20701 / CIP 104284 / JCM 5825 / NCTC 11152)).